The following is a 399-amino-acid chain: Secreted RxLR effector protein 36 (399 aa).

Residues 1–21 (MRGTIYVAIAILVAASSRSSA) form the signal peptide. The short motif at 50–71 (RILRESRGSNDKLAVGAGDEER) is the RxLR-dEER element. A glycan (N-linked (GlcNAc...) asparagine) is linked at Asn75. The interval 126-145 (IDPTPSNLGGQALHAPPNPD) is disordered.

Belongs to the RxLR effector family.

The protein localises to the secreted. Its subcellular location is the host nucleus. Its function is as follows. Secreted effector that completely suppresses the host cell death induced by cell death-inducing proteins. The protein is Secreted RxLR effector protein 36 of Plasmopara viticola (Downy mildew of grapevine).